Reading from the N-terminus, the 218-residue chain is Deoxyribose-phosphate aldolase (218 aa).

The active-site Proton donor/acceptor is Asp-89. Residue Lys-152 is the Schiff-base intermediate with acetaldehyde of the active site. Lys-182 serves as the catalytic Proton donor/acceptor.

It belongs to the DeoC/FbaB aldolase family. DeoC type 1 subfamily.

It localises to the cytoplasm. The catalysed reaction is 2-deoxy-D-ribose 5-phosphate = D-glyceraldehyde 3-phosphate + acetaldehyde. It functions in the pathway carbohydrate degradation; 2-deoxy-D-ribose 1-phosphate degradation; D-glyceraldehyde 3-phosphate and acetaldehyde from 2-deoxy-alpha-D-ribose 1-phosphate: step 2/2. In terms of biological role, catalyzes a reversible aldol reaction between acetaldehyde and D-glyceraldehyde 3-phosphate to generate 2-deoxy-D-ribose 5-phosphate. This chain is Deoxyribose-phosphate aldolase, found in Corynebacterium diphtheriae (strain ATCC 700971 / NCTC 13129 / Biotype gravis).